A 997-amino-acid polypeptide reads, in one-letter code: Mannuronan C5-epimerase AlgE5 (997 aa).

7 PbH1 repeats span residues 133–155 (DRDVTLERVEIREMSGYGFDPHE), 157–179 (TINLTIRDSVAHDNGLDGFVADF), 180–202 (QIGGVFENNVSYNNDRHGFNIVT), 204–226 (TNDFVLSNNVAYGNGGAGLVIQR), 257–279 (AHDVTLQNAEIYGNGLYGVRVYG), 280–315 (AEDVQILDNYIHDNSQSGSYAEILLQSYDDTAGVSG), and 320–359 (TTGTWIEGNTIVGSANSTYGIQERADGTDYSSLYANSVSN). Hemolysin-type calcium-binding repeat units lie at residues 388–403 (GTTGNDTLTGSEAHET), 406–422 (GLDGNDRLNGGAGNDIL), 424–439 (GGAGRDNLTGGAGADL), 557–573 (GHAGNDTLDGAGGDDIL), 574–590 (VGGAGRDTLTGGAGADL), 695–709 (GSAGNDSLQGTAADE), 712–729 (HGGAGRDTLSGGAGADVF), 828–839 (GSDGNDTLDGGS), 846–862 (GGAGNDSLDGGAGNDIL), and 864–880 (GGAGRDTLSGGSGSDIF).

The protein belongs to the D-mannuronate C5-epimerase family. Ca(2+) serves as cofactor.

Its subcellular location is the secreted. The catalysed reaction is [(1-&gt;4)-beta-D-mannuronosyl](n) = [alginate](n). Its pathway is glycan biosynthesis; alginate biosynthesis. With respect to regulation, inhibited by zinc. Functionally, converts beta-D-mannuronic acid (M) to alpha-L-guluronic acid (G), producing a polymer with gel-forming capacity, required for the formation of the cyst coat. This Azotobacter vinelandii protein is Mannuronan C5-epimerase AlgE5.